The following is a 99-amino-acid chain: Small ribosomal subunit protein uS19 (99 aa).

The protein belongs to the universal ribosomal protein uS19 family.

Protein S19 forms a complex with S13 that binds strongly to the 16S ribosomal RNA. The protein is Small ribosomal subunit protein uS19 of Sulfurihydrogenibium sp. (strain YO3AOP1).